A 400-amino-acid polypeptide reads, in one-letter code: 1-deoxy-D-xylulose 5-phosphate reductoisomerase (400 aa).

NADPH is bound by residues T10, G11, S12, I13, G36, N38, and N124. Residue K125 coordinates 1-deoxy-D-xylulose 5-phosphate. E126 provides a ligand contact to NADPH. Residue D150 participates in Mn(2+) binding. 1-deoxy-D-xylulose 5-phosphate-binding residues include S151, E152, S186, and H209. E152 contacts Mn(2+). NADPH is bound at residue G215. 1-deoxy-D-xylulose 5-phosphate is bound by residues S222, N227, K228, and E231. E231 is a Mn(2+) binding site.

It belongs to the DXR family. Mg(2+) is required as a cofactor. Requires Mn(2+) as cofactor.

It catalyses the reaction 2-C-methyl-D-erythritol 4-phosphate + NADP(+) = 1-deoxy-D-xylulose 5-phosphate + NADPH + H(+). The protein operates within isoprenoid biosynthesis; isopentenyl diphosphate biosynthesis via DXP pathway; isopentenyl diphosphate from 1-deoxy-D-xylulose 5-phosphate: step 1/6. Catalyzes the NADPH-dependent rearrangement and reduction of 1-deoxy-D-xylulose-5-phosphate (DXP) to 2-C-methyl-D-erythritol 4-phosphate (MEP). The sequence is that of 1-deoxy-D-xylulose 5-phosphate reductoisomerase from Aliivibrio fischeri (strain ATCC 700601 / ES114) (Vibrio fischeri).